A 318-amino-acid chain; its full sequence is Aspartate carbamoyltransferase catalytic subunit (318 aa).

Carbamoyl phosphate is bound by residues Arg58 and Thr59. Lys86 is an L-aspartate binding site. Positions 108, 141, and 144 each coordinate carbamoyl phosphate. Arg174 and Arg226 together coordinate L-aspartate. Carbamoyl phosphate contacts are provided by Gly270 and Pro271.

It belongs to the aspartate/ornithine carbamoyltransferase superfamily. ATCase family. Heterododecamer (2C3:3R2) of six catalytic PyrB chains organized as two trimers (C3), and six regulatory PyrI chains organized as three dimers (R2).

The enzyme catalyses carbamoyl phosphate + L-aspartate = N-carbamoyl-L-aspartate + phosphate + H(+). Its pathway is pyrimidine metabolism; UMP biosynthesis via de novo pathway; (S)-dihydroorotate from bicarbonate: step 2/3. Functionally, catalyzes the condensation of carbamoyl phosphate and aspartate to form carbamoyl aspartate and inorganic phosphate, the committed step in the de novo pyrimidine nucleotide biosynthesis pathway. The sequence is that of Aspartate carbamoyltransferase catalytic subunit from Lactobacillus gasseri (strain ATCC 33323 / DSM 20243 / BCRC 14619 / CIP 102991 / JCM 1131 / KCTC 3163 / NCIMB 11718 / NCTC 13722 / AM63).